A 132-amino-acid polypeptide reads, in one-letter code: Small ribosomal subunit protein uS9 (132 aa).

It belongs to the universal ribosomal protein uS9 family.

This chain is Small ribosomal subunit protein uS9, found in Mesomycoplasma hyopneumoniae (strain 232) (Mycoplasma hyopneumoniae).